The following is a 468-amino-acid chain: Secretogranin-3 (468 aa).

A signal peptide spans 1–19; it reads MGFLGTGTWILVLVLPIQA. Residues 23–69 form a disordered region; that stretch reads PGGSQDKSLHNRELSAERPLNEQIAEAEEDKIKKTYPPENKPGQSNY. Residues 29 to 42 are compositionally biased toward basic and acidic residues; that stretch reads KSLHNRELSAERPL. Ser-37 is modified (phosphoserine). O-linked (Xyl...) (chondroitin sulfate) serine glycosylation is present at Ser-37. O-linked (GalNAc...) threonine glycosylation is found at Thr-216 and Thr-231. The tract at residues 353-406 is disordered; the sequence is KLFPAPSEKSHEETDSTKEEAAKMEKEYGSLKDSTKDDNSNPGGKTDEPKGKTE. O-linked (GalNAc...) serine glycosylation occurs at Ser-359. Basic and acidic residues predominate over residues 360–406; the sequence is EKSHEETDSTKEEAAKMEKEYGSLKDSTKDDNSNPGGKTDEPKGKTE. The residue at position 362 (Ser-362) is a Phosphoserine.

In terms of assembly, interacts with CHGA. Interacts with secretogranin II/SCG2. Interacts (via C-terminus) with CPE. In terms of processing, O-glycosylated. Detected in urine (at protein level). Expressed in brain, heart, kidney, liver and skeletal muscle.

It is found in the cytoplasmic vesicle. The protein localises to the secretory vesicle. Its subcellular location is the secretory vesicle membrane. It localises to the secreted. Member of the granin protein family that regulates the biogenesis of secretory granules. Acts as a sorting receptor for intragranular proteins including chromogranin A/CHGA. May also play a role in angiogenesis. Promotes endothelial proliferation, migration and tube formation through MEK/ERK signaling pathway. This chain is Secretogranin-3 (SCG3), found in Homo sapiens (Human).